Reading from the N-terminus, the 428-residue chain is Adenylosuccinate synthetase (428 aa).

GTP-binding positions include 12 to 18 (GDEGKGK) and 40 to 42 (GHT). Asp-13 functions as the Proton acceptor in the catalytic mechanism. 2 residues coordinate Mg(2+): Asp-13 and Gly-40. Residues 13–16 (DEGK), 38–41 (NAGH), Thr-128, Arg-142, Gln-222, Thr-237, and Arg-301 contribute to the IMP site. Residue His-41 is the Proton donor of the active site. Substrate is bound at residue 297–303 (VNTGRAR). GTP contacts are provided by residues Arg-303, 329–331 (KLD), and 411–413 (STS).

Belongs to the adenylosuccinate synthetase family. Homodimer. It depends on Mg(2+) as a cofactor.

Its subcellular location is the cytoplasm. It carries out the reaction IMP + L-aspartate + GTP = N(6)-(1,2-dicarboxyethyl)-AMP + GDP + phosphate + 2 H(+). Its pathway is purine metabolism; AMP biosynthesis via de novo pathway; AMP from IMP: step 1/2. Plays an important role in the de novo pathway of purine nucleotide biosynthesis. Catalyzes the first committed step in the biosynthesis of AMP from IMP. The polypeptide is Adenylosuccinate synthetase (Caulobacter sp. (strain K31)).